A 287-amino-acid chain; its full sequence is Acetyl-coenzyme A carboxylase carboxyl transferase subunit beta (287 aa).

A CoA carboxyltransferase N-terminal domain is found at 25–287 (VWTKCSACEQ…KMLNTHVIEE (263 aa)). 4 residues coordinate Zn(2+): Cys-29, Cys-32, Cys-48, and Cys-51. The C4-type zinc-finger motif lies at 29-51 (CSACEQVLYRAELERNLEVCPKC).

This sequence belongs to the AccD/PCCB family. In terms of assembly, acetyl-CoA carboxylase is a heterohexamer composed of biotin carboxyl carrier protein (AccB), biotin carboxylase (AccC) and two subunits each of ACCase subunit alpha (AccA) and ACCase subunit beta (AccD). Zn(2+) is required as a cofactor.

The protein localises to the cytoplasm. The catalysed reaction is N(6)-carboxybiotinyl-L-lysyl-[protein] + acetyl-CoA = N(6)-biotinyl-L-lysyl-[protein] + malonyl-CoA. It functions in the pathway lipid metabolism; malonyl-CoA biosynthesis; malonyl-CoA from acetyl-CoA: step 1/1. Its function is as follows. Component of the acetyl coenzyme A carboxylase (ACC) complex. Biotin carboxylase (BC) catalyzes the carboxylation of biotin on its carrier protein (BCCP) and then the CO(2) group is transferred by the transcarboxylase to acetyl-CoA to form malonyl-CoA. In Aeromonas salmonicida (strain A449), this protein is Acetyl-coenzyme A carboxylase carboxyl transferase subunit beta.